Here is a 217-residue protein sequence, read N- to C-terminus: MAQQSLFYSFIARGTVILVEFTDFKGNFTSVAAQYLENLPSSNNKFTYNCDGHTFNDLVENGFTYCVVAVDSAGREIPMAFLERVKEDFYKRYGGEKAATDQANSLNKEFGSNLKEHMQYCMDHPDEISNLAKAKAQVSEVKSLMMENIEKVLARGVICEMLGSSESQPQAFYIKRTQMKRKKWFQNMKIKLIVLAIIIALILIIILSVCGGFNCGK.

Residues 1–192 lie on the Cytoplasmic side of the membrane; that stretch reads MAQQSLFYSF…KWFQNMKIKL (192 aa). The region spanning 10 to 114 is the Longin domain; it reads FIARGTVILV…SLNKEFGSNL (105 aa). The v-SNARE coiled-coil homology domain occupies 130-186; sequence NLAKAKAQVSEVKSLMMENIEKVLARGVICEMLGSSESQPQAFYIKRTQMKRKKWFQ. A helical; Anchor for type IV membrane protein transmembrane segment spans residues 193–213; it reads IVLAIIIALILIIILSVCGGF. The Vesicular segment spans residues 214–217; the sequence is NCGK.

Belongs to the synaptobrevin family. As to expression, highly expressed in stems and roots. Detected in flowers and leaves.

The protein localises to the endoplasmic reticulum membrane. Its function is as follows. Involved in the targeting and/or fusion of transport vesicles to their target membrane. In Arabidopsis thaliana (Mouse-ear cress), this protein is Vesicle-associated membrane protein 723.